The sequence spans 583 residues: Kelch-like protein 38 (583 aa).

One can recognise a BTB domain in the interval 34–101 (TDVILCTEDK…IYTGSITITM (68 aa)). The 102-residue stretch at 136-237 (CLSMIRLSEI…HPTYLFQFIA (102 aa)) folds into the BACK domain. 6 Kelch repeats span residues 285–332 (TLVV…CIHS), 333–385 (ILYV…SYLH), 386–433 (FIFA…ANDQ), 435–481 (IYVF…VIED), 482–523 (KIYI…VINN), and 525–575 (LYVT…PLIC).

The protein is Kelch-like protein 38 (klhl38) of Danio rerio (Zebrafish).